The following is an 873-amino-acid chain: F-box only protein 41 (873 aa).

Residues 85–97 (ESTSFQGKEQATG) show a composition bias toward polar residues. 3 disordered regions span residues 85-110 (ESTSFQGKEQATGPSPAGPHLLHHHH), 163-193 (SSACSTPPPGPGPGPCSGPSSASPASPSPAD), and 345-540 (SSSC…PSRS). Over residues 168–178 (TPPPGPGPGPC) the composition is skewed to pro residues. The span at 179-192 (SGPSSASPASPSPA) shows a compositional bias: low complexity. Residues 207 to 349 (ALEKLEVDRR…QLQVISSSCG (143 aa)) are a coiled coil. The segment covering 357 to 371 (GRGGGGSASGPGVRG) has biased composition (gly residues). An Omega-N-methylarginine modification is found at R358. Composition is skewed to polar residues over residues 384 to 414 (VPSTYAVSRHGSSPSTGASSRVPAASQSSGC) and 442 to 456 (AQATNGGSERSQAPR). A Phosphoserine modification is found at S476. T477 carries the phosphothreonine modification. An F-box domain is found at 548–592 (ILKMRAALFCIFTYLDTRTLLHAAEVCRDWRFVARHPAVWTRVLL). Phosphoserine is present on S760.

In terms of assembly, directly interacts with SKP1 and CUL1.

Its function is as follows. Substrate-recognition component of the SCF (SKP1-CUL1-F-box protein)-type E3 ubiquitin ligase complex. This is F-box only protein 41 (Fbxo41) from Mus musculus (Mouse).